Here is a 113-residue protein sequence, read N- to C-terminus: MTDLYQQTCEVCRADAPRVPVDEAEVMLEEIPLWRIQQQEGVKQLARNFKFKNFIEALAFTNTVANLAEEEGHHPKLVLEWGSVEVVWWTHKIKGLHKNDFVMAAKTDKLYEG.

The protein belongs to the pterin-4-alpha-carbinolamine dehydratase family.

The catalysed reaction is (4aS,6R)-4a-hydroxy-L-erythro-5,6,7,8-tetrahydrobiopterin = (6R)-L-erythro-6,7-dihydrobiopterin + H2O. In Saccharophagus degradans (strain 2-40 / ATCC 43961 / DSM 17024), this protein is Putative pterin-4-alpha-carbinolamine dehydratase.